A 659-amino-acid chain; its full sequence is Putative pentatricopeptide repeat-containing protein At3g16890, mitochondrial (659 aa).

Residues 1–32 (MRGFASSASRIATAAAASKSLNASTSVNPKLS) constitute a mitochondrion transit peptide. PPR repeat units lie at residues 109-143 (DQSLKSVLGNALFRKGPLLLSMELLKEIRDSGYRI), 144-178 (SDELMCVLIGSWGRLGLAKYCNDVFAQISFLGMKP), 179-213 (STRLYNAVIDALVKSNSLDLAYLKFQQMRSDGCKP), 214-248 (DRFTYNILIHGVCKKGVVDEAIRLVKQMEQEGNRP), 249-283 (NVFTYTILIDGFLIAGRVDEALKQLEMMRVRKLNP), 284-318 (NEATIRTFVHGIFRCLPPCKAFEVLVGFMEKDSNL), 319-353 (QRVGYDAVLYCLSNNSMAKETGQFLRKIGERGYIP), 354-388 (DSSTFNAAMSCLLKGHDLVETCRIFDGFVSRGVKP), 389-423 (GFNGYLVLVQALLNAQRFSEGDRYLKQMGVDGLLS), 424-458 (SVYSYNAVIDCLCKARRIENAAMFLTEMQDRGISP), 459-493 (NLVTFNTFLSGYSVRGDVKKVHGVLEKLLVHGFKP), 494-528 (DVITFSLIINCLCRAKEIKDAFDCFKEMLEWGIEP), 529-563 (NEITYNILIRSCCSTGDTDRSVKLFAKMKENGLSP), 564-598 (DLYAYNATIQSFCKMRKVKKAEELLKTMLRIGLKP), and 599-633 (DNFTYSTLIKALSESGRESEAREMFSSIERHGCVP).

It belongs to the PPR family. P subfamily.

It localises to the mitochondrion. Functionally, required for the ubiquinol-cytochrome c oxidoreductase activity of mitochondrial complex III. The sequence is that of Putative pentatricopeptide repeat-containing protein At3g16890, mitochondrial (PPR40) from Arabidopsis thaliana (Mouse-ear cress).